The primary structure comprises 323 residues: Calcium homeostasis modulator protein 2 (323 aa).

Residues 1–21 (MAALIAENFRFLSLFFKSKDV) lie on the Cytoplasmic side of the membrane. Residues 14–39 (LFFKSKDVMIFNGLVALGTVGSQELF) are central pore. The chain crosses the membrane as a helical span at residues 22-43 (MIFNGLVALGTVGSQELFSVVA). Over 44–52 (FHCPCSPAR) the chain is Extracellular. Intrachain disulfides connect cysteine 46/cysteine 130 and cysteine 48/cysteine 162. Residues 53–76 (NYLYGLAAIGVPALVLFIIGIILN) form a helical membrane-spanning segment. Residues 77–101 (NHTWNLVAECQHRRTKNCSAAPTFL) lie on the Cytoplasmic side of the membrane. The chain crosses the membrane as a helical span at residues 102-132 (LLSSILGRAAVAPVTWSVISLLRGEAYVCAL). The Extracellular portion of the chain corresponds to 133–179 (SEFVDPSSLTAREEHFPSAHATEILARFPCKENPDNLSDFREEVSRR). Residues 145–152 (EEHFPSAH) are hemichannel docking. Residues 180–206 (LRYESQLFGWLLIGVVAILVFLTKCLK) form a helical membrane-spanning segment. Over 207 to 323 (HYCSPLSYRQ…DNVEMALLPS (117 aa)) the chain is Cytoplasmic. Residues 214–251 (YRQEAYWAQYRANEDQLFQRTAEVHSRVLAANNVRRFF) form an intersubunit interaction region.

It belongs to the CALHM family. In terms of assembly, homo-undecamer. Two undecameric hemichannels can assemble in a head-to-head manner to form a gap junction. Placenta.

Its subcellular location is the cell membrane. The catalysed reaction is ATP(in) = ATP(out). Its activity is regulated as follows. Inhibited by Ca(2+) and ruthenium red in a voltage-dependent way. Its function is as follows. Pore-forming subunit of Ca(2+) homeostasis modulator channels. Mediates ATP release from astrocytes and ATP-induced Ca(2+) influx in microglia thus regulating neuronal ATP and Ca(2+) homeostasis, synaptic transmission and neuroinflammatory response. May form intercellular gap junctions. The gating mechanism remains unknown. This is Calcium homeostasis modulator protein 2 from Homo sapiens (Human).